The sequence spans 605 residues: DNA mismatch repair protein MutL (605 aa).

This sequence belongs to the DNA mismatch repair MutL/HexB family.

Functionally, this protein is involved in the repair of mismatches in DNA. It is required for dam-dependent methyl-directed DNA mismatch repair. May act as a 'molecular matchmaker', a protein that promotes the formation of a stable complex between two or more DNA-binding proteins in an ATP-dependent manner without itself being part of a final effector complex. In Pelotomaculum thermopropionicum (strain DSM 13744 / JCM 10971 / SI), this protein is DNA mismatch repair protein MutL.